The following is a 117-amino-acid chain: MTTSFYFLLMALGLLLYVCQSSFGNQHTRNSDTPKYRCGSDIPNSYMDLCFRKRNDAGKKRGQASPLWQRGGSLSMLKARAKRNEAFHLQRAHRGVVEHCCKRACSNAEFMQFCGNS.

Residues 1–24 (MTTSFYFLLMALGLLLYVCQSSFG) form the signal peptide. The propeptide occupies 25–29 (NQHTR). Pro34 bears the 4-hydroxyproline; partial mark. Disulfide bonds link Cys38-Cys101, Cys50-Cys114, and Cys100-Cys105. The propeptide at 53-94 (KRNDAGKKRGQASPLWQRGGSLSMLKARAKRNEAFHLQRAHR) is c peptide. Position 98 is a 4-carboxyglutamate (Glu98). The residue at position 109 (Glu109) is a 4-carboxyglutamate; partial. Cys114 carries the cysteine amide modification. Residues 116 to 117 (NS) constitute a propeptide that is removed on maturation.

The protein belongs to the insulin family. In terms of assembly, heterodimer of A and B chains; disulfide-linked. Expressed by the venom gland.

It localises to the secreted. In terms of biological role, this venom insulin facilitates prey capture by rapidly inducing hypoglycemic shock. It is one of the smallest known insulin found in nature and lacks the C-terminal segment of the B chain that, in human insulin, mediates engagement of the insulin receptor (INSR) and assembly of the hormone's hexameric storage form. Despite lacking this segment, it both binds and activates human insulin receptor (long isoform (HIR-B) OF INSR) with only a 10-fold lower potency. In vivo, intraperitoneal injection of this peptide into zebrafish lowers blood glucose with the same potency than human insulin. In addition, when applied to water, this peptide reduces overall locomotor activity of zebrafish larvae, observed as a significant decrease in the percentage of time spent swimming and movement frequency. The chain is Con-Ins T3 from Conus tulipa (Fish-hunting cone snail).